A 175-amino-acid chain; its full sequence is Nucleoside triphosphate/diphosphate phosphatase (175 aa).

Arg23 (proton donor) is an active-site residue. Asn87, Asp103, Asp105, Asp107, Asp120, and Glu123 together coordinate Mg(2+).

The protein belongs to the Ntdp family. Mg(2+) is required as a cofactor.

It catalyses the reaction a ribonucleoside 5'-triphosphate + H2O = a ribonucleoside 5'-diphosphate + phosphate + H(+). The enzyme catalyses a ribonucleoside 5'-diphosphate + H2O = a ribonucleoside 5'-phosphate + phosphate + H(+). Has nucleoside phosphatase activity towards nucleoside triphosphates and nucleoside diphosphates. The chain is Nucleoside triphosphate/diphosphate phosphatase from Halalkalibacterium halodurans (strain ATCC BAA-125 / DSM 18197 / FERM 7344 / JCM 9153 / C-125) (Bacillus halodurans).